Reading from the N-terminus, the 304-residue chain is uncharacterized protein (304 aa).

Residues 1-15 (MTRPRPPLGPAMAGA) form the signal peptide. The 124-residue stretch at 28–151 (NAAASTDADR…LSRWVDSLLS (124 aa)) folds into the Thioredoxin domain.

This is an uncharacterized protein from Mycobacterium bovis (strain ATCC BAA-935 / AF2122/97).